Here is a 186-residue protein sequence, read N- to C-terminus: Elongation factor P (186 aa).

Belongs to the elongation factor P family.

It localises to the cytoplasm. It functions in the pathway protein biosynthesis; polypeptide chain elongation. Functionally, involved in peptide bond synthesis. Stimulates efficient translation and peptide-bond synthesis on native or reconstituted 70S ribosomes in vitro. Probably functions indirectly by altering the affinity of the ribosome for aminoacyl-tRNA, thus increasing their reactivity as acceptors for peptidyl transferase. The polypeptide is Elongation factor P (Shewanella frigidimarina (strain NCIMB 400)).